The chain runs to 140 residues: Protein archease (140 aa).

Residues D12, D139, and L140 each contribute to the Ca(2+) site.

Belongs to the archease family.

In terms of biological role, activates the tRNA-splicing ligase complex by facilitating the enzymatic turnover of catalytic subunit RtcB. Acts by promoting the guanylylation of RtcB, a key intermediate step in tRNA ligation. Can also alter the NTP specificity of RtcB such that ATP, dGTP or ITP is used efficiently. May also act as a chaperone or modulator of proteins involved in DNA or RNA processing. The protein is Protein archease of Methanothermobacter thermautotrophicus (strain ATCC 29096 / DSM 1053 / JCM 10044 / NBRC 100330 / Delta H) (Methanobacterium thermoautotrophicum).